Here is a 128-residue protein sequence, read N- to C-terminus: Lutropin subunit beta (128 aa).

Intrachain disulfides connect C18–C66, C32–C81, C35–C119, C43–C97, C47–C99, and C102–C109. N22 is a glycosylation site (N-linked (GlcNAc...) asparagine).

The protein belongs to the glycoprotein hormones subunit beta family. Heterodimer of a common alpha chain and a unique beta chain which confers biological specificity to thyrotropin, lutropin, follitropin and gonadotropin.

It localises to the secreted. Promotes spermatogenesis and ovulation by stimulating the testes and ovaries to synthesize steroids. This Struthio camelus (Common ostrich) protein is Lutropin subunit beta (LHB).